The following is a 514-amino-acid chain: Cytochrome P450 monooxygenase aneD (514 aa).

A helical transmembrane segment spans residues 6 to 26 (ICTLLAVIATTSLGLLFLSII). 3 N-linked (GlcNAc...) asparagine glycosylation sites follow: N113, N261, and N347. Residue C424 participates in heme binding.

It belongs to the cytochrome P450 family. It depends on heme as a cofactor.

It localises to the membrane. The catalysed reaction is asperaculane D + reduced [NADPH--hemoprotein reductase] + O2 = asperaculane E + oxidized [NADPH--hemoprotein reductase] + H2O + H(+). Its pathway is secondary metabolite biosynthesis. In terms of biological role, cytochrome P450 monooxygenase; part of the gene cluster that mediates the biosynthesis of aculenes, a unique type of norsesquiterpenes that contain a nordaucane skeleton linked to an L-proline moiety and are of mixed biosynthetic origin. The pathway begins with the synthesis of dauca-4,7-diene by the terpene cyclase aneC using farnesyl pyrophosphate (FPP) as substrate. The cytochrome P450 monooxygenase aneF then performs the initial oxidation at C-12 of dauca-4,7-diene to yield asperaculane D. Asperaculane D is substrate of the cytochrome P450 monooxygenase aneD for C-10 hydroxylation to yield asperaculane E. The cytochrome P450 monooxygenase aneG then converts asperaculane E into aculene D via C-2 oxidation. The monomodular nonribosomal peptide synthtase aneB adenylates L-proline and the thiohydrolase aneE transfers this activated L-proline derivative to aculenes D and C to produce respectively aculenes B and A. The dioxygenase aneA converts aculene D into aculene C, and aculene B into aculene A by introducing the 5,6-alkene moiety. Asperculanes A, B, C and F, as well as 14-prolyl asperculane C, might be shunt products of the pathway. The chain is Cytochrome P450 monooxygenase aneD from Aspergillus aculeatus (strain ATCC 16872 / CBS 172.66 / WB 5094).